A 465-amino-acid chain; its full sequence is UDP-N-acetylmuramate--L-alanine ligase (465 aa).

112–118 lines the ATP pocket; the sequence is GTHGKTT.

The protein belongs to the MurCDEF family.

Its subcellular location is the cytoplasm. The catalysed reaction is UDP-N-acetyl-alpha-D-muramate + L-alanine + ATP = UDP-N-acetyl-alpha-D-muramoyl-L-alanine + ADP + phosphate + H(+). The protein operates within cell wall biogenesis; peptidoglycan biosynthesis. Its function is as follows. Cell wall formation. This chain is UDP-N-acetylmuramate--L-alanine ligase, found in Burkholderia ambifaria (strain ATCC BAA-244 / DSM 16087 / CCUG 44356 / LMG 19182 / AMMD) (Burkholderia cepacia (strain AMMD)).